A 236-amino-acid polypeptide reads, in one-letter code: Small ribosomal subunit protein uS3 (236 aa).

One can recognise a KH type-2 domain in the interval Val-39 to Lys-107.

The protein belongs to the universal ribosomal protein uS3 family. As to quaternary structure, part of the 30S ribosomal subunit. Forms a tight complex with proteins S10 and S14.

Functionally, binds the lower part of the 30S subunit head. Binds mRNA in the 70S ribosome, positioning it for translation. The polypeptide is Small ribosomal subunit protein uS3 (Wigglesworthia glossinidia brevipalpis).